The sequence spans 441 residues: Probable acetylornithine aminotransferase, mitochondrial (441 aa).

Residue Lys294 is modified to N6-(pyridoxal phosphate)lysine.

Belongs to the class-III pyridoxal-phosphate-dependent aminotransferase family. Requires pyridoxal 5'-phosphate as cofactor.

The protein resides in the mitochondrion matrix. It catalyses the reaction N(2)-acetyl-L-ornithine + 2-oxoglutarate = N-acetyl-L-glutamate 5-semialdehyde + L-glutamate. Its pathway is amino-acid biosynthesis; L-arginine biosynthesis; N(2)-acetyl-L-ornithine from L-glutamate: step 4/4. This chain is Probable acetylornithine aminotransferase, mitochondrial (arg1), found in Schizosaccharomyces pombe (strain 972 / ATCC 24843) (Fission yeast).